Reading from the N-terminus, the 630-residue chain is Triacylglycerol lipase ptl2 (630 aa).

The PNPLA domain occupies 251–442; that stretch reads LCLSGGASFA…RTDIPLSELR (192 aa). The GXSXG motif lies at 282-286; it reads GTSGG. Residue Ser284 is the Nucleophile of the active site. Asp429 functions as the Proton acceptor in the catalytic mechanism.

It belongs to the PLPL family.

Its subcellular location is the lipid droplet. The enzyme catalyses a triacylglycerol + H2O = a diacylglycerol + a fatty acid + H(+). Its function is as follows. Lipid particle-localized triacylglycerol (TAG) lipase. The lipid droplet/particle is a lipid storage compartment which serves as a depot of energy and building blocks for membrane lipid biosynthesis. Involved in the mobilization of the non-polar storage lipids triacylglycerols (TAGs) from lipid particles by hydrolysis of TAGs, releasing and supplying specific fatty acids to the appropriate metabolic pathways. This chain is Triacylglycerol lipase ptl2 (ptl2), found in Schizosaccharomyces pombe (strain 972 / ATCC 24843) (Fission yeast).